The chain runs to 204 residues: Bombinin-like peptides 1 (204 aa).

The or 18 signal peptide spans 1–16 (MNFKYIVAVSILIASA). An asparagine amide mark is found at Asn70 and Asn133.

This sequence belongs to the bombinin family. Expressed by the skin glands.

It is found in the secreted. Has antimicrobial activity, but no hemolytic activity. Preference on killing Gram-negative non-enteric bacteria. This Bombina orientalis (Oriental fire-bellied toad) protein is Bombinin-like peptides 1.